A 100-amino-acid polypeptide reads, in one-letter code: Urease subunit gamma (100 aa).

Belongs to the urease gamma subunit family. In terms of assembly, heterotrimer of UreA (gamma), UreB (beta) and UreC (alpha) subunits. Three heterotrimers associate to form the active enzyme.

The protein resides in the cytoplasm. The enzyme catalyses urea + 2 H2O + H(+) = hydrogencarbonate + 2 NH4(+). Its pathway is nitrogen metabolism; urea degradation; CO(2) and NH(3) from urea (urease route): step 1/1. The sequence is that of Urease subunit gamma from Mycolicibacterium vanbaalenii (strain DSM 7251 / JCM 13017 / BCRC 16820 / KCTC 9966 / NRRL B-24157 / PYR-1) (Mycobacterium vanbaalenii).